A 264-amino-acid chain; its full sequence is 3-methyl-2-oxobutanoate hydroxymethyltransferase (264 aa).

Mg(2+) contacts are provided by aspartate 45 and aspartate 84. Residues 45 to 46 (DS), aspartate 84, and lysine 112 each bind 3-methyl-2-oxobutanoate. Mg(2+) is bound at residue glutamate 114. Glutamate 181 acts as the Proton acceptor in catalysis.

It belongs to the PanB family. In terms of assembly, homodecamer; pentamer of dimers. The cofactor is Mg(2+).

Its subcellular location is the cytoplasm. The catalysed reaction is 3-methyl-2-oxobutanoate + (6R)-5,10-methylene-5,6,7,8-tetrahydrofolate + H2O = 2-dehydropantoate + (6S)-5,6,7,8-tetrahydrofolate. It participates in cofactor biosynthesis; (R)-pantothenate biosynthesis; (R)-pantoate from 3-methyl-2-oxobutanoate: step 1/2. Its function is as follows. Catalyzes the reversible reaction in which hydroxymethyl group from 5,10-methylenetetrahydrofolate is transferred onto alpha-ketoisovalerate to form ketopantoate. The polypeptide is 3-methyl-2-oxobutanoate hydroxymethyltransferase (Vibrio vulnificus (strain YJ016)).